The primary structure comprises 860 residues: Glucans biosynthesis glucosyltransferase H (860 aa).

A run of 6 helical transmembrane segments spans residues 146–166 (ILLI…KGIL), 200–220 (ILLL…TALM), 519–539 (VFLT…FLVL), 576–596 (LFST…ILIW), 610–630 (TVSM…RMLF), and 686–706 (FLWW…VSVI).

This sequence belongs to the glycosyltransferase 2 family. OpgH subfamily.

The protein localises to the cell inner membrane. The protein operates within glycan metabolism; osmoregulated periplasmic glucan (OPG) biosynthesis. Its function is as follows. Involved in the biosynthesis of osmoregulated periplasmic glucans (OPGs). This Pseudomonas syringae pv. syringae (strain B728a) protein is Glucans biosynthesis glucosyltransferase H.